The sequence spans 396 residues: Cathepsin E (396 aa).

A signal peptide spans 1–19 (MKTLPLLLLLLLDLGQAQG). Positions 20 to 53 (TLDRVPLRRQPSLRKKLRAQGQLSEFWKAHKVDM) are cleaved as a propeptide — activation peptide. One can recognise a Peptidase A1 domain in the interval 78–392 (YFGTISIGSP…DRGSNRVGLA (315 aa)). The N-linked (GlcNAc...) asparagine glycan is linked to N90. D96 is an active-site residue. Disulfide bonds link C109–C114 and C272–C276. D281 is an active-site residue. Cysteines 314 and 351 form a disulfide.

Belongs to the peptidase A1 family. Homodimer; disulfide-linked. Glycosylated. The nature of the carbohydrate chain varies between cell types.

It localises to the endosome. It carries out the reaction Similar to cathepsin D, but slightly broader specificity.. Functionally, may have a role in immune function. Probably involved in the processing of antigenic peptides during MHC class II-mediated antigen presentation. May play a role in activation-induced lymphocyte depletion in the thymus, and in neuronal degeneration and glial cell activation in the brain. In Oryctolagus cuniculus (Rabbit), this protein is Cathepsin E (CTSE).